We begin with the raw amino-acid sequence, 379 residues long: Carbamoyl phosphate synthase small chain (379 aa).

A CPSase region spans residues 1-189 (MSKSALLVLE…GLPEAKADSE (189 aa)). Ser-47, Gly-241, and Gly-243 together coordinate L-glutamine. Positions 193–379 (HVVAYDFGAK…FIELIKQFRA (187 aa)) constitute a Glutamine amidotransferase type-1 domain. Cys-269 acts as the Nucleophile in catalysis. Residues Leu-270, Gln-273, Asn-311, Gly-313, and Phe-314 each coordinate L-glutamine. Active-site residues include His-353 and Glu-355.

The protein belongs to the CarA family. Composed of two chains; the small (or glutamine) chain promotes the hydrolysis of glutamine to ammonia, which is used by the large (or ammonia) chain to synthesize carbamoyl phosphate. Tetramer of heterodimers (alpha,beta)4.

It catalyses the reaction hydrogencarbonate + L-glutamine + 2 ATP + H2O = carbamoyl phosphate + L-glutamate + 2 ADP + phosphate + 2 H(+). The catalysed reaction is L-glutamine + H2O = L-glutamate + NH4(+). Its pathway is amino-acid biosynthesis; L-arginine biosynthesis; carbamoyl phosphate from bicarbonate: step 1/1. The protein operates within pyrimidine metabolism; UMP biosynthesis via de novo pathway; (S)-dihydroorotate from bicarbonate: step 1/3. Its function is as follows. Small subunit of the glutamine-dependent carbamoyl phosphate synthetase (CPSase). CPSase catalyzes the formation of carbamoyl phosphate from the ammonia moiety of glutamine, carbonate, and phosphate donated by ATP, constituting the first step of 2 biosynthetic pathways, one leading to arginine and/or urea and the other to pyrimidine nucleotides. The small subunit (glutamine amidotransferase) binds and cleaves glutamine to supply the large subunit with the substrate ammonia. The sequence is that of Carbamoyl phosphate synthase small chain from Vibrio cholerae serotype O1 (strain ATCC 39315 / El Tor Inaba N16961).